Consider the following 616-residue polypeptide: MKENVASMIVFLLLLFLNIRLLKGQSPPGKPFIFKCRSPEKETFTCWWRPGADGGLPTNYTLTYHKEGETITHECPDYKTGGPNSCYFSKKHTSIWTIYIITVNATNQMGSSVSDPRYVDVTYIVEPDPPVNLTLEVKHPEDRKPYLWVKWLPPTLVDVRSGWLTLQYEIRLKPEKAAEWETHFAGQQTQFKILSLYPGQKYLVQVRCKPDHGFWSVWSPESSIQIPNDFTMKDITVWIFVAVLSTIICLIMVWAVALKGYSMVTCIFPPVPGPKIKGFDTHLLEKGKSEELLSAFGCQDFPPTADCEDLLVEFLEVDDSEDQQLMPAHSKEHSGPGMKPTDLDPDNDSGRGSCDSPSLLSEKCEEPQANPSTFHTPEVIEQPEKPKANVTHTWDPQTISLVGKMPYLSVNGSKSSTWPLLQPGQHNTNSPYHNIADMCKLATSLDKIDKDALQSSKTTEAAGEEKATKQREVESSHSKAEQDTGWLLPKEKPPFISPKPLDYVEIHKVNKDGALSLLLKQKENGDQTGKAGTPETSKEYAKVSRVMDNNILVLVQDPGAQNVALFEESTKEAPPSPSQNQAEKDLSSFSTAPSDCRLQQGGLDYLDPACFMHSLH.

The N-terminal stretch at 1–24 (MKENVASMIVFLLLLFLNIRLLKG) is a signal peptide. At 25–234 (QSPPGKPFIF…QIPNDFTMKD (210 aa)) the chain is on the extracellular side. Fibronectin type-III domains follow at residues 27 to 128 (PPGK…VEPD) and 129 to 229 (PPVN…IPND). Cys36 and Cys46 are disulfide-bonded. An N-linked (GlcNAc...) asparagine glycan is attached at Asn59. Cys75 and Cys86 form a disulfide bridge. Asn104 and Asn132 each carry an N-linked (GlcNAc...) asparagine glycan. Zn(2+)-binding residues include Asp211 and His212. The WSXWS motif signature appears at 215-219 (WSVWS). The helical transmembrane segment at 235–258 (ITVWIFVAVLSTIICLIMVWAVAL) threads the bilayer. At 259 to 616 (KGYSMVTCIF…DPACFMHSLH (358 aa)) the chain is on the cytoplasmic side. The short motif at 267 to 275 (IFPPVPGPK) is the Box 1 motif element. 3 disordered regions span residues 326 to 375 (MPAH…STFH), 454 to 492 (QSSK…PKEK), and 568 to 593 (ESTK…STAP). Basic and acidic residues predominate over residues 463 to 482 (GEEKATKQREVESSHSKAEQ).

It belongs to the type I cytokine receptor family. Type 1 subfamily. In terms of assembly, interacts with SMARCA1. Interacts with NEK3 and VAV2 and this interaction is prolactin-dependent.

It localises to the membrane. Functionally, this is a receptor for the anterior pituitary hormone prolactin. The sequence is that of Prolactin receptor (PRLR) from Oryctolagus cuniculus (Rabbit).